The sequence spans 412 residues: Homoserine dehydrogenase (412 aa).

NADP(+) contacts are provided by residues 9-16 (LGIGTVGG) and K105. E190 lines the substrate pocket. K205 acts as the Proton donor in catalysis. The region spanning 330 to 407 (YLRLRAVDKP…ISGKVTRLRM (78 aa)) is the ACT domain.

Belongs to the homoserine dehydrogenase family.

It catalyses the reaction L-homoserine + NADP(+) = L-aspartate 4-semialdehyde + NADPH + H(+). The enzyme catalyses L-homoserine + NAD(+) = L-aspartate 4-semialdehyde + NADH + H(+). It participates in amino-acid biosynthesis; L-methionine biosynthesis via de novo pathway; L-homoserine from L-aspartate: step 3/3. It functions in the pathway amino-acid biosynthesis; L-threonine biosynthesis; L-threonine from L-aspartate: step 3/5. This Methylobacillus glycogenes protein is Homoserine dehydrogenase (hom).